Reading from the N-terminus, the 614-residue chain is Putative binding protein BMEII0691 (614 aa).

Positions 1 to 28 (MNRFIAFFRSVFLIGLVATAFGALPARA) are cleaved as a signal peptide.

Belongs to the bacterial solute-binding protein 5 family.

It is found in the periplasm. This Brucella melitensis biotype 1 (strain ATCC 23456 / CCUG 17765 / NCTC 10094 / 16M) protein is Putative binding protein BMEII0691.